A 257-amino-acid chain; its full sequence is Ribonuclease PH (257 aa).

Phosphate contacts are provided by residues Arg-86 and 124 to 126 (GTR).

The protein belongs to the RNase PH family. In terms of assembly, homohexameric ring arranged as a trimer of dimers.

It catalyses the reaction tRNA(n+1) + phosphate = tRNA(n) + a ribonucleoside 5'-diphosphate. In terms of biological role, phosphorolytic 3'-5' exoribonuclease that plays an important role in tRNA 3'-end maturation. Removes nucleotide residues following the 3'-CCA terminus of tRNAs; can also add nucleotides to the ends of RNA molecules by using nucleoside diphosphates as substrates, but this may not be physiologically important. Probably plays a role in initiation of 16S rRNA degradation (leading to ribosome degradation) during starvation. The sequence is that of Ribonuclease PH from Sulfurihydrogenibium sp. (strain YO3AOP1).